A 249-amino-acid chain; its full sequence is Structural protein VP10 (249 aa).

The protein localises to the virion. Forms the virion spike 'foot' and helps anchor the VP9 spike 'head' protein in the virion. This is Structural protein VP10 (Segment-10) from Banna virus (BAV).